The following is a 153-amino-acid chain: Deoxyuridine 5'-triphosphate nucleotidohydrolase (153 aa).

Residues 71-73 (RSG), asparagine 84, 88-90 (TID), and lysine 98 contribute to the substrate site.

This sequence belongs to the dUTPase family. The cofactor is Mg(2+).

It catalyses the reaction dUTP + H2O = dUMP + diphosphate + H(+). It functions in the pathway pyrimidine metabolism; dUMP biosynthesis; dUMP from dCTP (dUTP route): step 2/2. Its function is as follows. This enzyme is involved in nucleotide metabolism: it produces dUMP, the immediate precursor of thymidine nucleotides and it decreases the intracellular concentration of dUTP so that uracil cannot be incorporated into DNA. This is Deoxyuridine 5'-triphosphate nucleotidohydrolase from Ehrlichia canis (strain Jake).